Here is a 267-residue protein sequence, read N- to C-terminus: MRILVEIAYQGNNFLGFQIQQNGRTVQQQFEKLLQRMHKRHVRIHPSSRTDRGVHAIQQYFHFDTELNIPMSQWQYAMNRTLPVDIYVNNVVTVDDDFHCRYDCVGKRYRYKVYQAQHRDPFQRGLKTFIPEPLDLDKMNRAAQQFIGTHDFTGFCSQKTEVESKVRTLYQSEIVKTDDGFDYIVTGSGFLYNMVRVLVAFLIEVGKGRHEVSDVPKLLESKNRKNVPFTAPAEGLYLEKIYLDENELLKDFGNDIKIHRKKSLQND.

The Nucleophile role is filled by Asp-51. Substrate is bound at residue Tyr-109.

It belongs to the tRNA pseudouridine synthase TruA family. Homodimer.

It catalyses the reaction uridine(38/39/40) in tRNA = pseudouridine(38/39/40) in tRNA. In terms of biological role, formation of pseudouridine at positions 38, 39 and 40 in the anticodon stem and loop of transfer RNAs. This chain is tRNA pseudouridine synthase A, found in Staphylococcus aureus (strain bovine RF122 / ET3-1).